A 336-amino-acid chain; its full sequence is Iron(3+)-hydroxamate import system permease protein FhuG (336 aa).

9 helical membrane-spanning segments follow: residues 9–29 (LIVM…SLNL), 63–83 (IILS…LQSV), 91–111 (PGIL…IYFF), 124–144 (FMLP…IYIL), 155–175 (LILV…IFQL), 193–213 (IWGA…ILLL), 245–265 (ILLL…GGIA), 285–305 (TLIP…DTLA), and 313–333 (EIPV…YLLM).

This sequence belongs to the binding-protein-dependent transport system permease family. FecCD subfamily. As to quaternary structure, the complex is composed of an ATP-binding protein (FhuC), two transmembrane proteins (FhuB and FhuG) and a solute-binding protein (FhuD or YxeB).

Its subcellular location is the cell membrane. Part of the ABC transporter complex FhuBGCD involved in iron(3+)-hydroxamate import. Responsible for the translocation of the substrate across the membrane. The protein is Iron(3+)-hydroxamate import system permease protein FhuG (fhuG) of Bacillus subtilis (strain 168).